The sequence spans 384 residues: S-adenosylmethionine synthase (384 aa).

Histidine 15 is a binding site for ATP. Aspartate 17 provides a ligand contact to Mg(2+). Glutamate 43 serves as a coordination point for K(+). The L-methionine site is built by glutamate 56 and glutamine 99. A flexible loop region spans residues 99-109 (QSPDINQGVDR). Residues 164–166 (DAK), 230–231 (RF), aspartate 239, 245–246 (RK), alanine 262, and lysine 266 contribute to the ATP site. Aspartate 239 contacts L-methionine. Lysine 270 contributes to the L-methionine binding site.

It belongs to the AdoMet synthase family. As to quaternary structure, homotetramer; dimer of dimers. Mg(2+) is required as a cofactor. K(+) serves as cofactor.

The protein localises to the cytoplasm. The enzyme catalyses L-methionine + ATP + H2O = S-adenosyl-L-methionine + phosphate + diphosphate. It participates in amino-acid biosynthesis; S-adenosyl-L-methionine biosynthesis; S-adenosyl-L-methionine from L-methionine: step 1/1. In terms of biological role, catalyzes the formation of S-adenosylmethionine (AdoMet) from methionine and ATP. The overall synthetic reaction is composed of two sequential steps, AdoMet formation and the subsequent tripolyphosphate hydrolysis which occurs prior to release of AdoMet from the enzyme. This is S-adenosylmethionine synthase from Klebsiella pneumoniae subsp. pneumoniae (strain ATCC 700721 / MGH 78578).